The primary structure comprises 607 residues: MENPPNETEAKQIQTNEGKKTKGGIITMPFIIANEAFEKVASYGLLPNMIMYLIRDYRFGVAKGTNVLFMWSAASNFTPLLGAFLSDSYLGRFLTISIASLSSFLGMVLLWLTAMLPQVKPSPCDPTAAGSHCGSSTASQLALLYSAFALISIGSGGIRPCSLAFGADQLDNKENPKNERVLESFFGWYYASSAVAVLIAFTGIVYIQEHLGWKIGFGVPAVLMLIAALLFILASPLYVTRGVTKSLFTGLAQAIVAAYKKRKLSLPDHHDSFDCYYHMKDSEIKAPSQKLRFLNKACLISNREEEIGSDGFALNPWRLCTTDKVEELKALIKVIPIWSTGIMMSINTSQSSFQLLQATSMDRRLSRHGSSFQVPAGSFGMFTIIALALWVILYDRAVIPLASKIRGRPFRLSVKLRMGLGLFMSFLAMAISAMVESFRRKKAISQGYANNSNAVVDISAMWLVPQYVLHGLAEALTAIGQTEFFYTEFPKSMSSIAASLFGLGMAVASLLASVVLNAVNELTSRNGKESWVSDNINKGHYNYYYWVLAIMSFINVIYYVICSWSYGPLVDQVRNGRVNGVREEEELIDIVGKGFEKEDLSPVVKTN.

Transmembrane regions (helical) follow at residues Thr-65–Leu-85, Ile-96–Leu-116, Ala-138–Ile-158, Phe-185–Val-205, Ile-215–Ser-235, Val-374–Tyr-394, Met-418–Phe-438, Ala-460–Gly-480, Ile-496–Leu-516, and Tyr-544–Trp-564. Ser-601 bears the Phosphoserine mark.

The protein belongs to the major facilitator superfamily. Proton-dependent oligopeptide transporter (POT/PTR) (TC 2.A.17) family. As to expression, expressed in shoots, stems, leaves, flowers and siliques. Mainly detected in larger expanded leaves, in the companion cells of major veins.

It is found in the cell membrane. Its function is as follows. Low-affinity nitrate transporter involved in xylem-to-phloem transfer for redistributing nitrate into developing leaves. Not involved in dipeptides transport. The chain is Protein NRT1/ PTR FAMILY 1.2 (NPF1.2) from Arabidopsis thaliana (Mouse-ear cress).